The following is a 319-amino-acid chain: Geranylgeranyl pyrophosphate synthase (319 aa).

Positions 42, 45, and 74 each coordinate isopentenyl diphosphate. Asp81 and Asp85 together coordinate Mg(2+). Arg90 is a dimethylallyl diphosphate binding site. Arg91 contributes to the isopentenyl diphosphate binding site. Residues Lys172, Thr173, Gln210, Lys226, and Lys236 each contribute to the dimethylallyl diphosphate site.

It belongs to the FPP/GGPP synthase family. In terms of assembly, homodimer. Requires Mg(2+) as cofactor.

It carries out the reaction isopentenyl diphosphate + dimethylallyl diphosphate = (2E)-geranyl diphosphate + diphosphate. The enzyme catalyses isopentenyl diphosphate + (2E)-geranyl diphosphate = (2E,6E)-farnesyl diphosphate + diphosphate. The catalysed reaction is isopentenyl diphosphate + (2E,6E)-farnesyl diphosphate = (2E,6E,10E)-geranylgeranyl diphosphate + diphosphate. The protein operates within isoprenoid biosynthesis; geranyl diphosphate biosynthesis; geranyl diphosphate from dimethylallyl diphosphate and isopentenyl diphosphate: step 1/1. Its pathway is isoprenoid biosynthesis; farnesyl diphosphate biosynthesis; farnesyl diphosphate from geranyl diphosphate and isopentenyl diphosphate: step 1/1. It participates in isoprenoid biosynthesis; geranylgeranyl diphosphate biosynthesis; geranylgeranyl diphosphate from farnesyl diphosphate and isopentenyl diphosphate: step 1/1. Its function is as follows. Catalyzes the addition of 3 molecules of isopentenyl diphosphate (IPP) onto dimethylallyl diphosphate (DMAPP) to form geranylgeranyl pyrophosphate (GGPP). Catalyzes the synthesis of geranylgeranyl pyrophosphate as a major product and of farnesyl pyrophosphate in smaller amounts. This Geoglobus acetivorans protein is Geranylgeranyl pyrophosphate synthase.